Here is a 202-residue protein sequence, read N- to C-terminus: uncharacterized protein (202 aa).

The signal sequence occupies residues Met-1–Ala-18.

To E.coli YebB.

This is an uncharacterized protein from Escherichia coli (strain K12).